A 511-amino-acid chain; its full sequence is MLILGTSLANQVHASWQTYIMIIIYFTILLFIGYYGYKQATGNLSEFMLGGRSIGPYVTALSAGASDMSGWMIMGLPGSVYSTGLSAMWITIGLSLGAYVNYFVVAPRLRVYTELAGDAITLPDFFKNRLNDHNNYIKIISGLIIVVFFTLYTHSGFVSGGKLFESAFGLNYHWGLLMVAFIVIFYTFFGGYLAVSITDFFQGVIMLIAMVMVPIVALIDLNGIDTFKQVAEMKPTNMNLFKGTTVLGIISLFAWGLGYFGQPHIIVRFMSIKSHKLLPKARRLGISWMVIGLLGAVAVGLTGIAFISERNIKLEDPETLFIVMSQILFHPLVGGFLLAAILAAIMSTISSQLLVTSSSLTEDFYKLIRGEDKAKAHEKEFLMVGRLSVLIVAIVAIWIAWSPNDTILNLVGNAWAGFGAAFSPLVIFSLYWKGLSRTGALAGMITGALVVIIWIVWIKPLASINELFGMYEIIPGFLASVITTYFVSKYTKKPGSFVTHDLDKVKQIVKE.

A run of 13 helical transmembrane segments spans residues 16 to 36 (WQTYIMIIIYFTILLFIGYYG), 54 to 74 (IGPYVTALSAGASDMSGWMIM), 85 to 105 (LSAMWITIGLSLGAYVNYFVV), 139 to 159 (IISGLIIVVFFTLYTHSGFVS), 175 to 195 (GLLMVAFIVIFYTFFGGYLAV), 204 to 224 (VIMLIAMVMVPIVALIDLNGI), 246 to 266 (VLGIISLFAWGLGYFGQPHII), 286 to 306 (ISWMVIGLLGAVAVGLTGIAF), 327 to 347 (ILFHPLVGGFLLAAILAAIMS), 381 to 401 (FLMVGRLSVLIVAIVAIWIAW), 410 to 430 (LVGNAWAGFGAAFSPLVIFSL), 438 to 458 (TGALAGMITGALVVIIWIVWI), and 467 to 487 (LFGMYEIIPGFLASVITTYFV).

It belongs to the sodium:solute symporter (SSF) (TC 2.A.21) family.

It is found in the cell membrane. It carries out the reaction L-proline(in) + Na(+)(in) = L-proline(out) + Na(+)(out). Its function is as follows. Catalyzes the sodium-dependent uptake of extracellular L-proline. The protein is Sodium/proline symporter 2 (putP2) of Staphylococcus saprophyticus subsp. saprophyticus (strain ATCC 15305 / DSM 20229 / NCIMB 8711 / NCTC 7292 / S-41).